Consider the following 418-residue polypeptide: Tyrosine--tRNA ligase (418 aa).

Residue Tyr38 coordinates L-tyrosine. The 'HIGH' region motif lies at 43–52 (CTARSLHIGS). 2 residues coordinate L-tyrosine: Tyr175 and Gln179. Residues 235–239 (KMGKT) carry the 'KMSKS' region motif. Residue Lys238 coordinates ATP. In terms of domain architecture, S4 RNA-binding spans 348–413 (LSVVKLLQVS…CGKKRHLKVV (66 aa)).

It belongs to the class-I aminoacyl-tRNA synthetase family. TyrS type 1 subfamily. In terms of assembly, homodimer.

Its subcellular location is the cytoplasm. It carries out the reaction tRNA(Tyr) + L-tyrosine + ATP = L-tyrosyl-tRNA(Tyr) + AMP + diphosphate + H(+). In terms of biological role, catalyzes the attachment of tyrosine to tRNA(Tyr) in a two-step reaction: tyrosine is first activated by ATP to form Tyr-AMP and then transferred to the acceptor end of tRNA(Tyr). The protein is Tyrosine--tRNA ligase of Ehrlichia ruminantium (strain Gardel).